The primary structure comprises 544 residues: MAKFVFITGGVVSSIGKGIVAASLGRLLKSRGYNVSILKLDPYLNVDPGTMSPIQHGEVFVTEDGAETDLDLGHYERFTDTAMSRLNSVTTGSIYQAVINKERRGDYNGGTVQVIPHITGEIRERIHRVAANSNADVVITEIGGTVGDIESLPFLEAIREFSGDVGRNDLAYIHVTLLPFIGTSGELKTKPTQHSVKELRSIGIQPDVLVCRSDRTISEEMKRKIGGFCGVPTRAVIPSLDAESIYAVPLTLEQEGLCREVLDVLDLTDHDSDMAAWQELVHKLRNPGPAVKVALVGKYIQLNDAYLSVVEALRHACIAQDASLDLHWVCAEQIESDGAQALLKGMDAVVVPGGFGNRGVDGKIAAIRWAREQRVPFLGLCLGMQTAVIEWARNQAGLTEATSAELDAGTPHPVIHLLPEQQDVVDLGGTMRLGVYPCRIAPDTLAHRLYGDQVVYERHRHRYEFNNAYRNLFLESGYVVSGSSPDGRLVELIELKGHPFFTACQYHPEFLSRPGRPHPLFQGLIEAAQQRLPSSPVEAIQTQR.

Positions 1–267 are amidoligase domain; it reads MAKFVFITGG…CREVLDVLDL (267 aa). Serine 13 lines the CTP pocket. Residue serine 13 participates in UTP binding. Residues 14 to 19 and aspartate 71 contribute to the ATP site; that span reads SIGKGI. Residues aspartate 71 and glutamate 141 each contribute to the Mg(2+) site. CTP is bound by residues 148-150, 188-193, and lysine 224; these read DIE and KTKPTQ. Residues 188–193 and lysine 224 contribute to the UTP site; that span reads KTKPTQ. The 243-residue stretch at 292–534 folds into the Glutamine amidotransferase type-1 domain; sequence KVALVGKYIQ…IEAAQQRLPS (243 aa). Residue glycine 354 coordinates L-glutamine. Cysteine 381 functions as the Nucleophile; for glutamine hydrolysis in the catalytic mechanism. Residues 382 to 385, glutamate 405, and arginine 462 contribute to the L-glutamine site; that span reads LGMQ. Active-site residues include histidine 507 and glutamate 509.

The protein belongs to the CTP synthase family. As to quaternary structure, homotetramer.

The catalysed reaction is UTP + L-glutamine + ATP + H2O = CTP + L-glutamate + ADP + phosphate + 2 H(+). The enzyme catalyses L-glutamine + H2O = L-glutamate + NH4(+). It carries out the reaction UTP + NH4(+) + ATP = CTP + ADP + phosphate + 2 H(+). It functions in the pathway pyrimidine metabolism; CTP biosynthesis via de novo pathway; CTP from UDP: step 2/2. Its activity is regulated as follows. Allosterically activated by GTP, when glutamine is the substrate; GTP has no effect on the reaction when ammonia is the substrate. The allosteric effector GTP functions by stabilizing the protein conformation that binds the tetrahedral intermediate(s) formed during glutamine hydrolysis. Inhibited by the product CTP, via allosteric rather than competitive inhibition. Its function is as follows. Catalyzes the ATP-dependent amination of UTP to CTP with either L-glutamine or ammonia as the source of nitrogen. Regulates intracellular CTP levels through interactions with the four ribonucleotide triphosphates. This is CTP synthase from Parasynechococcus marenigrum (strain WH8102).